Consider the following 147-residue polypeptide: Probable inactive ribonuclease-like protein 12 (147 aa).

An N-terminal signal peptide occupies residues 1–20 (MIIMVIIFLVLLFWENEVND).

It belongs to the pancreatic ribonuclease family.

The protein resides in the secreted. Does not exhibit any ribonuclease activity. This chain is Probable inactive ribonuclease-like protein 12 (RNASE12), found in Homo sapiens (Human).